A 488-amino-acid polypeptide reads, in one-letter code: MQYRDLRDFIRGLEQRGELKRIQVPISPVLEMTEVCDRTLRAKGPALLFEKPTGFDIPVLGNLFGTPERVAMGMGAESVSELREIGKLLAFLKEPEPPKGLKDAWSKLPIFKKVVSMAPKVVKDAVCQEVVVEGDDVDLGTLPIQHCWPGDVAPLITWGLTVTRGPNKDRQNLGIYRQQVIGRNKVIMRWLSHRGGALDYREWCEKNPGQPFPVAVALGADPATILGAVTPVPDTLSEYAFAGLLRGNRTELVKCRGSNLQVPATAEIILEGVIHPGEMAPEGPYGDHTGYYNEVDSFPVFTVERITHRQKPIYHSTYTGRPPDEPAILGVALNEVFVPILQKQFPEITDFYLPPEGCSYRMAVVTMKKQYPGHAKRVMLGVWSFLRQFMYTKFVIVTDDDINARDWNDVIWAITTRMDPKRDTVMIDNTPIDYLDFASPVSGLGSKMGLDATHKWPGETTREWGRVIVKDEAVTRRIDELWDQLGID.

N172 contacts Mn(2+). Prenylated FMN is bound by residues 175–177, 189–191, and 194–195; these read IYR, RWL, and RG. E238 serves as a coordination point for Mn(2+). Residue D287 is the Proton donor of the active site.

The protein belongs to the UbiD family. As to quaternary structure, homohexamer. Prenylated FMN serves as cofactor. The cofactor is Mn(2+).

Its subcellular location is the cell membrane. The enzyme catalyses a 4-hydroxy-3-(all-trans-polyprenyl)benzoate + H(+) = a 2-(all-trans-polyprenyl)phenol + CO2. It functions in the pathway cofactor biosynthesis; ubiquinone biosynthesis. Catalyzes the decarboxylation of 3-octaprenyl-4-hydroxy benzoate to 2-octaprenylphenol, an intermediate step in ubiquinone biosynthesis. The chain is 3-octaprenyl-4-hydroxybenzoate carboxy-lyase from Pseudomonas putida (strain ATCC 47054 / DSM 6125 / CFBP 8728 / NCIMB 11950 / KT2440).